A 189-amino-acid chain; its full sequence is MVMLLLLLSALAGLFGAAEGQAFHLGKCPNPPVQENFDVNKYLGRWYEIEKIPTTFENGRCIQANYSLMENGKIKVLNQELRADGTVNQIEGEATPVNLTEPAKLEVKFSWFMPSAPYWILATDYENYALVYSCTCIIQLFHVDFAWILARNPNLPPETVDSLKNILTSNNIDVKKMTVTDQVNCPKLS.

The first 20 residues, 1–20, serve as a signal peptide directing secretion; that stretch reads MVMLLLLLSALAGLFGAAEG. The residue at position 21 (Gln21) is a Pyrrolidone carboxylic acid. 2 disulfides stabilise this stretch: Cys28–Cys134 and Cys61–Cys185. N-linked (GlcNAc...) (complex) asparagine glycosylation is found at Asn65 and Asn98.

This sequence belongs to the calycin superfamily. Lipocalin family. In terms of assembly, homodimer. In plasma, also exists as a disulfide-linked heterodimer with APOA2. Post-translationally, N-glycosylated. N-glycan heterogeneity at Asn-65: Hex5HexNAc4 (major) and Hex6HexNAc5 (minor); at Asn-98: Hex5HexNAc4 (minor), dHex1Hex5HexNAc4 (major), dHex1Hex6HexNAc5 (minor) and dHex1Hex7HexNAc6 (minor). Expressed in liver, intestine, pancreas, kidney, placenta, adrenal, spleen, fetal brain tissue and tears.

It localises to the secreted. Functionally, APOD occurs in the macromolecular complex with lecithin-cholesterol acyltransferase. It is probably involved in the transport and binding of bilin. Appears to be able to transport a variety of ligands in a number of different contexts. The chain is Apolipoprotein D (APOD) from Homo sapiens (Human).